The sequence spans 512 residues: Maturase K (512 aa).

This sequence belongs to the intron maturase 2 family. MatK subfamily.

It is found in the plastid. Its subcellular location is the chloroplast. Usually encoded in the trnK tRNA gene intron. Probably assists in splicing its own and other chloroplast group II introns. The protein is Maturase K of Filarum manserichense.